The following is a 528-amino-acid chain: DEAD-box ATP-dependent RNA helicase 6 (528 aa).

Composition is skewed to low complexity over residues 1-15 (MNNN…PPGI) and 65-80 (QQYV…QQQQ). The disordered stretch occupies residues 1–80 (MNNNNNNRGR…GYPQQIQQQQ (80 aa)). The Q motif motif lies at 154–182 (NEFEDYFLKRDLLRGIYEKGFEKPSPIQE). One can recognise a Helicase ATP-binding domain in the interval 185 to 355 (IPIALTGSDI…DRYLKKPYII (171 aa)). 198–205 (AKNGTGKT) is an ATP binding site. Thr-260 carries the post-translational modification Phosphothreonine. Residues 303-306 (DEAD) carry the DEAD box motif. Residues 365–525 (GVTQYYAFVE…PIPSLIDKAI (161 aa)) enclose the Helicase C-terminal domain.

Belongs to the DEAD box helicase family. DDX6/DHH1 subfamily.

Its subcellular location is the cytoplasm. The protein localises to the P-body. It carries out the reaction ATP + H2O = ADP + phosphate + H(+). ATP-dependent RNA helicase involved in mRNA turnover, and more specifically in mRNA decapping. The chain is DEAD-box ATP-dependent RNA helicase 6 (RH6) from Arabidopsis thaliana (Mouse-ear cress).